Reading from the N-terminus, the 564-residue chain is Dihydroxy-acid dehydratase (564 aa).

Residue D78 coordinates Mg(2+). C119 serves as a coordination point for [2Fe-2S] cluster. 2 residues coordinate Mg(2+): D120 and K121. Position 121 is an N6-carboxylysine (K121). Residue C192 coordinates [2Fe-2S] cluster. E451 contacts Mg(2+). Catalysis depends on S477, which acts as the Proton acceptor.

It belongs to the IlvD/Edd family. Homodimer. Requires [2Fe-2S] cluster as cofactor. The cofactor is Mg(2+).

The catalysed reaction is (2R)-2,3-dihydroxy-3-methylbutanoate = 3-methyl-2-oxobutanoate + H2O. It catalyses the reaction (2R,3R)-2,3-dihydroxy-3-methylpentanoate = (S)-3-methyl-2-oxopentanoate + H2O. Its pathway is amino-acid biosynthesis; L-isoleucine biosynthesis; L-isoleucine from 2-oxobutanoate: step 3/4. It participates in amino-acid biosynthesis; L-valine biosynthesis; L-valine from pyruvate: step 3/4. Functions in the biosynthesis of branched-chain amino acids. Catalyzes the dehydration of (2R,3R)-2,3-dihydroxy-3-methylpentanoate (2,3-dihydroxy-3-methylvalerate) into 2-oxo-3-methylpentanoate (2-oxo-3-methylvalerate) and of (2R)-2,3-dihydroxy-3-methylbutanoate (2,3-dihydroxyisovalerate) into 2-oxo-3-methylbutanoate (2-oxoisovalerate), the penultimate precursor to L-isoleucine and L-valine, respectively. The polypeptide is Dihydroxy-acid dehydratase (Nitratiruptor sp. (strain SB155-2)).